The primary structure comprises 275 residues: Autophagy protein 5 (275 aa).

Methionine 1 carries the post-translational modification N-acetylmethionine. Lysine 130 is covalently cross-linked (Glycyl lysine isopeptide (Lys-Gly) (interchain with G-Cter in ATG12)).

The protein belongs to the ATG5 family. As to quaternary structure, forms a conjugate with ATG12. Part of the minor complex composed of 4 sets of ATG12-ATG5 and ATG16L1 (400 kDa); this complex interacts with ATG3 leading to disruption of ATG7 interaction and promotion of ATG8-like proteins lipidation. Forms an 800-kDa complex composed of ATG12-ATG5 and ATG16L2. The ATG12-ATG5 conjugate interacts with RAB33A; this interaction is bridged by ATG16L1 and promotes ATG12-ATG5-ATG16L1 complex recruitment to phagophores. Interacts with TECPR1; the interaction is direct and does not take place when ATG16L1 is associated with the ATG5-ATG12 conjugate. Interacts with DHX58/RIG-1, IFIH1/MDA5 and MAVS/IPS-1 in monomeric form as well as in ATG12-ATG5 conjugate form. The interaction with MAVS is further enhanced upon vesicular stomatitis virus (VSV) infection. Interacts with ATG3. Interacts with ATG7 and ATG10. Interacts with FADD. Interacts with Bassoon/BSN; this interaction is important for the regulation of presynaptic autophagy. Interacts with ATG16L2. Conjugated to ATG12; which is essential for autophagy, but is not required for association with isolation membrane. In terms of processing, acetylated by EP300.

The protein localises to the cytoplasm. The protein resides in the preautophagosomal structure membrane. Functionally, involved in autophagic vesicle formation. Conjugation with ATG12, through a ubiquitin-like conjugating system involving ATG7 as an E1-like activating enzyme and ATG10 as an E2-like conjugating enzyme, is essential for its function. The ATG12-ATG5 conjugate acts as an E3-like enzyme which is required for lipidation of ATG8 family proteins and their association to the vesicle membranes. Involved in mitochondrial quality control after oxidative damage, and in subsequent cellular longevity. Plays a critical role in multiple aspects of lymphocyte development and is essential for both B and T lymphocyte survival and proliferation. Required for optimal processing and presentation of antigens for MHC II. Involved in the maintenance of axon morphology and membrane structures, as well as in normal adipocyte differentiation. Promotes primary ciliogenesis through removal of OFD1 from centriolar satellites and degradation of IFT20 via the autophagic pathway. As part of the ATG8 conjugation system with ATG12 and ATG16L1, required for recruitment of LRRK2 to stressed lysosomes and induction of LRRK2 kinase activity in response to lysosomal stress. May play an important role in the apoptotic process, possibly within the modified cytoskeleton. Its expression is a relatively late event in the apoptotic process, occurring downstream of caspase activity. Plays a crucial role in IFN-gamma-induced autophagic cell death by interacting with FADD. This chain is Autophagy protein 5, found in Bos taurus (Bovine).